Consider the following 236-residue polypeptide: ATP synthase subunit 4, mitochondrial (236 aa).

The transit peptide at M1–Y29 directs the protein to the mitochondrion.

It belongs to the eukaryotic ATPase subunit B family. As to quaternary structure, F-type ATPases have 2 components, CF(1) - the catalytic core - and CF(0) - the membrane proton channel. In yeast, the dimeric form of ATP synthase consists of 17 polypeptides: alpha, beta, gamma, delta, epsilon, 4 (B), 5 (OSCP), 6 (A), 8, 9 (C), d, E (Tim11), f, g, h, i/j and k.

Its subcellular location is the mitochondrion. It localises to the mitochondrion inner membrane. Its function is as follows. Mitochondrial membrane ATP synthase (F(1)F(0) ATP synthase or Complex V) produces ATP from ADP in the presence of a proton gradient across the membrane which is generated by electron transport complexes of the respiratory chain. F-type ATPases consist of two structural domains, F(1) - containing the extramembraneous catalytic core, and F(0) - containing the membrane proton channel, linked together by a central stalk and a peripheral stalk. During catalysis, ATP synthesis in the catalytic domain of F(1) is coupled via a rotary mechanism of the central stalk subunits to proton translocation. Part of the complex F(0) domain and the peripheric stalk, which acts as a stator to hold the catalytic alpha(3)beta(3) subcomplex and subunit a/ATP6 static relative to the rotary elements. This is ATP synthase subunit 4, mitochondrial (ATP4) from Eremothecium gossypii (strain ATCC 10895 / CBS 109.51 / FGSC 9923 / NRRL Y-1056) (Yeast).